Consider the following 487-residue polypeptide: ATP synthase subunit beta (487 aa).

164–171 lines the ATP pocket; sequence GGAGVGKT.

It belongs to the ATPase alpha/beta chains family. In terms of assembly, F-type ATPases have 2 components, CF(1) - the catalytic core - and CF(0) - the membrane proton channel. CF(1) has five subunits: alpha(3), beta(3), gamma(1), delta(1), epsilon(1). CF(0) has four main subunits: a(1), b(1), b'(1) and c(9-12).

The protein localises to the cellular thylakoid membrane. The enzyme catalyses ATP + H2O + 4 H(+)(in) = ADP + phosphate + 5 H(+)(out). Its function is as follows. Produces ATP from ADP in the presence of a proton gradient across the membrane. The catalytic sites are hosted primarily by the beta subunits. In Synechococcus sp. (strain CC9605), this protein is ATP synthase subunit beta.